We begin with the raw amino-acid sequence, 255 residues long: Formate hydrogenlyase subunit 7 (255 aa).

4 residues coordinate [4Fe-4S] cluster: Cys45, Cys51, Cys115, and Cys145.

The protein belongs to the complex I 20 kDa subunit family. As to quaternary structure, FHL comprises of a formate dehydrogenase, unidentified electron carriers and a hydrogenase (isoenzyme 3). In this non-energy conserving pathway molecular hydrogen and carbodioxide from formate are released. It depends on [4Fe-4S] cluster as a cofactor.

This Escherichia coli (strain K12) protein is Formate hydrogenlyase subunit 7 (hycG).